A 310-amino-acid polypeptide reads, in one-letter code: Ribosomal RNA small subunit methyltransferase H (310 aa).

Residues 33 to 35, aspartate 52, phenylalanine 79, aspartate 98, and glutamine 105 contribute to the S-adenosyl-L-methionine site; that span reads GGH.

The protein belongs to the methyltransferase superfamily. RsmH family.

The protein localises to the cytoplasm. It carries out the reaction cytidine(1402) in 16S rRNA + S-adenosyl-L-methionine = N(4)-methylcytidine(1402) in 16S rRNA + S-adenosyl-L-homocysteine + H(+). In terms of biological role, specifically methylates the N4 position of cytidine in position 1402 (C1402) of 16S rRNA. This chain is Ribosomal RNA small subunit methyltransferase H, found in Campylobacter jejuni subsp. doylei (strain ATCC BAA-1458 / RM4099 / 269.97).